The primary structure comprises 342 residues: Oxygen-dependent coproporphyrinogen-III oxidase (342 aa).

Residue S98 coordinates substrate. A divalent metal cation is bound by residues H102 and H112. The Proton donor role is filled by H112. 114–116 contributes to the substrate binding site; sequence NYR. A divalent metal cation contacts are provided by H146 and H176. Positions 266-301 are important for dimerization; that stretch reads YVEFNLVWDRGTIFGLQTNGRTESILMSLPPLARWE.

This sequence belongs to the aerobic coproporphyrinogen-III oxidase family. In terms of assembly, homodimer. The cofactor is a divalent metal cation.

The protein localises to the cytoplasm. It carries out the reaction coproporphyrinogen III + O2 + 2 H(+) = protoporphyrinogen IX + 2 CO2 + 2 H2O. It functions in the pathway porphyrin-containing compound metabolism; protoporphyrin-IX biosynthesis; protoporphyrinogen-IX from coproporphyrinogen-III (O2 route): step 1/1. Its function is as follows. Involved in the heme and chlorophyll biosynthesis. Catalyzes the aerobic oxidative decarboxylation of propionate groups of rings A and B of coproporphyrinogen-III to yield the vinyl groups in protoporphyrinogen-IX. The sequence is that of Oxygen-dependent coproporphyrinogen-III oxidase from Prochlorococcus marinus (strain MIT 9301).